The chain runs to 436 residues: GTPase Der (436 aa).

EngA-type G domains are found at residues 4–167 (PVIA…PKIE) and 176–351 (IRFS…ESHS). Residues 10–17 (GRPNVGKS), 57–61 (DTGGI), 119–122 (NKVD), 182–189 (GRPNVGKS), 229–233 (DTAGM), and 294–297 (NKWD) contribute to the GTP site. A KH-like domain is found at 352 to 436 (IRIQTNVLND…PIHIIARARD (85 aa)).

It belongs to the TRAFAC class TrmE-Era-EngA-EngB-Septin-like GTPase superfamily. EngA (Der) GTPase family. In terms of assembly, associates with the 50S ribosomal subunit.

GTPase that plays an essential role in the late steps of ribosome biogenesis. In Bacillus anthracis (strain A0248), this protein is GTPase Der.